Reading from the N-terminus, the 489-residue chain is CUGBP Elav-like family member 1-A (489 aa).

RRM domains are found at residues 16-99, 108-188, and 404-482; these read IKMF…PADS, RKLF…FADT, and ANLF…LKRS. Residues 183 to 210 form a necessary for oligomerization and EDEN-dependent deadenylation region; sequence VKFADTQKDKEQKRMTQQLQQQMQQLNA.

This sequence belongs to the CELF/BRUNOL family. As to quaternary structure, oligomer. Oligomerization is required for RNA-binding and EDEN-dependent deadenylation. Post-translationally, phosphorylated during oocyte maturation and dephosphorylated following egg activation. Dephosphorylation is calcium dependent and correlates with the increase in the activity of EDEN-dependent deadenylation.

Its subcellular location is the nucleus. The protein localises to the cytoplasm. Functionally, RNA-binding protein implicated in the regulation of several post-transcriptional events. May be involved in pre-mRNA alternative splicing, mRNA translation activation and stability. Mediates the rapid and sequence-specific cytoplasmic deadenylation of EDEN-containing maternal mRNAs following fertilization. Binds to AU-rich sequences (AREs) of jun mRNA. Binds to the embryonic deadenylation element (EDEN) motif localized in the 3'-UTR of maternal mRNAs. Binds to RNA containing several repeats of the consensus sequence 5'-UGU-3'. EDEN-dependent deadenylation is enhanced by the presence of an additional cis element composed of three AUU repeats. This is CUGBP Elav-like family member 1-A (cugbp1-a) from Xenopus laevis (African clawed frog).